The chain runs to 172 residues: UBA-like domain-containing protein 2 (172 aa).

A compositionally biased stretch (pro residues) spans 118–130 (PPNQQPVWLPPSS). The disordered stretch occupies residues 118–172 (PPNQQPVWLPPSSPTGHHTLHHHHHHMHPPPSWPPVSQPANGPQTPVISALHGQR). A compositionally biased stretch (basic residues) spans 135 to 145 (HTLHHHHHHMH).

Belongs to the UBALD family.

The sequence is that of UBA-like domain-containing protein 2 (ubald2) from Danio rerio (Zebrafish).